We begin with the raw amino-acid sequence, 352 residues long: Photosystem II D2 protein (352 aa).

An N-acetylthreonine modification is found at Thr2. The residue at position 2 (Thr2) is a Phosphothreonine. A helical membrane pass occupies residues 40–60 (TAYLALGGWLTGTTFVTSWYT). A chlorophyll a-binding site is contributed by His117. Residues 124-140 (GFMLRQFEIARSVKLRP) traverse the membrane as a helical segment. Residues Gln129 and Asn142 each coordinate pheophytin a. The chain crosses the membrane as a helical span at residues 152-165 (VFVSVFLIYPLGQS). His197 contributes to the chlorophyll a binding site. The helical transmembrane segment at 207–227 (AALLCAIHGATVENTLFEDGD) threads the bilayer. His214 and Phe261 together coordinate a plastoquinone. His214 provides a ligand contact to Fe cation. Position 268 (His268) interacts with Fe cation. The helical transmembrane segment at 278-294 (GLWMSALGVVGLALNLR) threads the bilayer.

This sequence belongs to the reaction center PufL/M/PsbA/D family. In terms of assembly, PSII is composed of 1 copy each of membrane proteins PsbA, PsbB, PsbC, PsbD, PsbE, PsbF, PsbH, PsbI, PsbJ, PsbK, PsbL, PsbM, PsbT, PsbX, PsbY, PsbZ, Psb30/Ycf12, at least 3 peripheral proteins of the oxygen-evolving complex and a large number of cofactors. It forms dimeric complexes. The D1/D2 heterodimer binds P680, chlorophylls that are the primary electron donor of PSII, and subsequent electron acceptors. It shares a non-heme iron and each subunit binds pheophytin, quinone, additional chlorophylls, carotenoids and lipids. There is also a Cl(-1) ion associated with D1 and D2, which is required for oxygen evolution. The PSII complex binds additional chlorophylls, carotenoids and specific lipids. is required as a cofactor.

It localises to the plastid. The protein localises to the chloroplast thylakoid membrane. The catalysed reaction is 2 a plastoquinone + 4 hnu + 2 H2O = 2 a plastoquinol + O2. Functionally, photosystem II (PSII) is a light-driven water:plastoquinone oxidoreductase that uses light energy to abstract electrons from H(2)O, generating O(2) and a proton gradient subsequently used for ATP formation. It consists of a core antenna complex that captures photons, and an electron transfer chain that converts photonic excitation into a charge separation. The D1/D2 (PsbA/PsbD) reaction center heterodimer binds P680, the primary electron donor of PSII as well as several subsequent electron acceptors. D2 is needed for assembly of a stable PSII complex. The protein is Photosystem II D2 protein of Pleurastrum terricola (Filamentous green alga).